Here is a 233-residue protein sequence, read N- to C-terminus: Phosphoribosylformylglycinamidine synthase subunit PurQ (233 aa).

The region spanning 3-233 (SAVLVFPGIN…GLVEHLKTAA (231 aa)) is the Glutamine amidotransferase type-1 domain. C87 serves as the catalytic Nucleophile. Residues H204 and E206 contribute to the active site.

Part of the FGAM synthase complex composed of 1 PurL, 1 PurQ and 2 PurS subunits.

It is found in the cytoplasm. It catalyses the reaction N(2)-formyl-N(1)-(5-phospho-beta-D-ribosyl)glycinamide + L-glutamine + ATP + H2O = 2-formamido-N(1)-(5-O-phospho-beta-D-ribosyl)acetamidine + L-glutamate + ADP + phosphate + H(+). The catalysed reaction is L-glutamine + H2O = L-glutamate + NH4(+). It functions in the pathway purine metabolism; IMP biosynthesis via de novo pathway; 5-amino-1-(5-phospho-D-ribosyl)imidazole from N(2)-formyl-N(1)-(5-phospho-D-ribosyl)glycinamide: step 1/2. In terms of biological role, part of the phosphoribosylformylglycinamidine synthase complex involved in the purines biosynthetic pathway. Catalyzes the ATP-dependent conversion of formylglycinamide ribonucleotide (FGAR) and glutamine to yield formylglycinamidine ribonucleotide (FGAM) and glutamate. The FGAM synthase complex is composed of three subunits. PurQ produces an ammonia molecule by converting glutamine to glutamate. PurL transfers the ammonia molecule to FGAR to form FGAM in an ATP-dependent manner. PurS interacts with PurQ and PurL and is thought to assist in the transfer of the ammonia molecule from PurQ to PurL. This Rhodopseudomonas palustris (strain HaA2) protein is Phosphoribosylformylglycinamidine synthase subunit PurQ.